Consider the following 449-residue polypeptide: Keratin, type I cytoskeletal 27 (449 aa).

The interval 1-73 is head; sequence MSVRFSSASR…VNEHGLLSGN (73 aa). The segment at 74-109 is coil 1A; sequence EKVTMQNLNDRLASYLENVQALEEANADLEQKIKDW. The IF rod domain occupies 74 to 389; that stretch reads EKVTMQNLND…LLIGGDEGSC (316 aa). Residues 110–131 are linker 1; sequence YEKFGPGSCRGLDHDYSRYFPI. Residues 132-223 are coil 1B; the sequence is IDDLRTQIIS…KNHEEEMQAL (92 aa). The linker 12 stretch occupies residues 224 to 246; the sequence is QCAAGGNVNVEMNAAPGVDLTVL. Residues 247–385 are coil 2; sequence LNNMRAEYEA…ETYCLLIGGD (139 aa). A tail region spans residues 386-449; the sequence is EGSCVKSKGQ…NNKNEQRIPS (64 aa). The disordered stretch occupies residues 425–449; the sequence is LSSRVHTLEEKSTKVNNKNEQRIPS. A compositionally biased stretch (basic and acidic residues) spans 430-449; that stretch reads HTLEEKSTKVNNKNEQRIPS.

The protein belongs to the intermediate filament family. Heterotetramer of two type I and two type II keratins. Interacts with KRT6A to form filaments.

It is found in the cytoplasm. Essential for the proper assembly of type I and type II keratin protein complexes and formation of keratin intermediate filaments in the inner root sheath (irs). The protein is Keratin, type I cytoskeletal 27 of Rattus norvegicus (Rat).